The following is an 858-amino-acid chain: Lysine-specific demethylase JMJ706 (858 aa).

A JmjN domain is found at 103 to 144 (CPVYYPTKEEFEDPIGYIQKIAPVASKYGICKIVSPVSASVP). The 171-residue stretch at 250-420 (KSNWNLKNFS…LGSVASRRYA (171 aa)) folds into the JmjC domain. Histidine 293, glutamate 295, and histidine 388 together coordinate Fe cation. Residues 737–746 (QHNKRPEDYG) are compositionally biased toward basic and acidic residues. Disordered regions lie at residues 737–791 (QHNK…SAKQ) and 829–858 (SSST…WPAI). Residues 829–844 (SSSTNRVVEQGSSGQR) are compositionally biased toward polar residues.

Fe(2+) is required as a cofactor.

It is found in the nucleus. It catalyses the reaction N(6),N(6),N(6)-trimethyl-L-lysyl(9)-[histone H3] + 2 2-oxoglutarate + 2 O2 = N(6)-methyl-L-lysyl(9)-[histone H3] + 2 formaldehyde + 2 succinate + 2 CO2. Functionally, histone demethylase that demethylates 'Lys-9' (H3K9me) of histone H3 with a specific activity for H3K9me3 and H3K9me2. No activity on H3K4me3, H3K9me1, H3K27me2 and H3K36me3/2. Involved in the control of floral organ development by demethylating H3K9me3 and H3K9me2 in the promoter regions of DH1 and MADS47. The 'Lys-9' demethylation of these two genes is required for induction of their expression. In Oryza sativa subsp. japonica (Rice), this protein is Lysine-specific demethylase JMJ706 (JMJ706).